The chain runs to 132 residues: Agouti-signaling protein (132 aa).

An N-terminal signal peptide occupies residues Met-1–Ser-22. Asn-39 carries an N-linked (GlcNAc...) asparagine glycan. The tract at residues Gln-61–Thr-87 is disordered. Positions Ser-63–Met-79 are enriched in basic and acidic residues. Intrachain disulfides connect Cys-93–Cys-108, Cys-100–Cys-114, Cys-107–Cys-125, Cys-111–Cys-132, and Cys-116–Cys-123. Residues Cys-93–Cys-132 enclose the Agouti domain.

The protein localises to the secreted. Involved in the regulation of melanogenesis. The binding of ASP to MC1R precludes alpha-MSH initiated signaling and thus blocks production of cAMP, leading to a down-regulation of eumelanogenesis (brown/black pigment) and thus increasing synthesis of pheomelanin (yellow/red pigment). The sequence is that of Agouti-signaling protein (ASIP) from Macaca nigrescens (Gorontalo macaque).